We begin with the raw amino-acid sequence, 145 residues long: Histone H2B.7 (145 aa).

A compositionally biased stretch (basic and acidic residues) spans 1 to 30 (MAPKAEKKPAEKKPVEEKSKAEKAPAEKKP). The disordered stretch occupies residues 1–53 (MAPKAEKKPAEKKPVEEKSKAEKAPAEKKPKAGKKLPKEAGAGGDKKKKMKKK). Ala2 bears the N,N,N-trimethylalanine; alternate mark. Ala2 bears the N,N-dimethylalanine; alternate mark. Ala2 carries the N-methylalanine; alternate modification. Lys4 is subject to N6-methyllysine; partial. N6-acetyllysine is present on residues Lys7 and Lys12. The residue at position 13 (Lys13) is an N6,N6-dimethyllysine. An N6-acetyllysine mark is found at Lys23, Lys28, and Lys34. Lys35 carries the N6-acetyllysine; partial modification. Lys141 is covalently cross-linked (Glycyl lysine isopeptide (Lys-Gly) (interchain with G-Cter in ubiquitin)).

Belongs to the histone H2B family. As to quaternary structure, the nucleosome is a histone octamer containing two molecules each of H2A, H2B, H3 and H4 assembled in one H3-H4 heterotetramer and two H2A-H2B heterodimers. The octamer wraps approximately 147 bp of DNA. In terms of processing, can be acetylated to form H2BK6ac, H2BK11ac, H2BK22ac, H2BK27ac H2BK33ac and H2BK34ac. Post-translationally, mono-, di- or trimethylated at the N-terminus to form H2BA1me1/2/3. H2BA1me2 and H2BA1me3 may be methylated and/or acetylated to form H2BA1me2K3me1, H2BA1me2K3me1K6ac, H2BA1me2K6ac H2BA1me3K6ac, H2BA1me3K6acK11ac and H2BA1me2K3me1K6acK11ac. Monoubiquitinated by BRE1 to form H2BK143ub1 and deubiquitinated by UBP26. Required for heterochromatic histone H3 di- and trimethylation at H3K4me. May give a specific tag for epigenetic transcriptional activation.

It is found in the nucleus. The protein resides in the chromosome. Its function is as follows. Core component of nucleosome. Nucleosomes wrap and compact DNA into chromatin, limiting DNA accessibility to the cellular machineries which require DNA as a template. Histones thereby play a central role in transcription regulation, DNA repair, DNA replication and chromosomal stability. DNA accessibility is regulated via a complex set of post-translational modifications of histones, also called histone code, and nucleosome remodeling. This chain is Histone H2B.7, found in Arabidopsis thaliana (Mouse-ear cress).